Reading from the N-terminus, the 492-residue chain is UTP--glucose-1-phosphate uridylyltransferase (492 aa).

Residues Leu-110–Gly-113, Lys-124, Gln-183, and Gly-210 contribute to the UTP site. A substrate-binding site is contributed by Gly-112 to Gly-113. Residue Lys-124 participates in Mg(2+) binding. Residues His-211 and Asn-239–Asp-241 each bind substrate. The UTP site is built by Asp-241 and Lys-379. Asp-241 serves as a coordination point for Mg(2+). Lys-379 is a catalytic residue. Residues Val-441–His-492 are oligomerization.

It belongs to the UDPGP type 1 family. In terms of assembly, homooctamer.

It carries out the reaction alpha-D-glucose 1-phosphate + UTP + H(+) = UDP-alpha-D-glucose + diphosphate. Plays a central role as a glucosyl donor in cellular metabolic pathways. This Encephalitozoon cuniculi (strain GB-M1) (Microsporidian parasite) protein is UTP--glucose-1-phosphate uridylyltransferase (UGP1).